The chain runs to 694 residues: Long-chain-fatty-acid--CoA ligase 3 (694 aa).

The segment at 1–25 (MSEQHSVAVGKAANEHETAPRRNVR) is disordered. An N-acetylserine modification is found at S2. Residue 269-280 (YTSGSISAPKGV) coordinates ATP. Residues 527 to 576 (DGWFRTGDIVEWTPKGQLKIIDRRKNLVKTLNGEYIALEKLESVYRSNSY) carry the FACS motif.

Belongs to the ATP-dependent AMP-binding enzyme family. As to quaternary structure, interacts with FRK1. Mg(2+) is required as a cofactor.

It localises to the cell membrane. The catalysed reaction is a long-chain fatty acid + ATP + CoA = a long-chain fatty acyl-CoA + AMP + diphosphate. The enzyme catalyses (9Z)-octadecenoate + ATP + CoA = (9Z)-octadecenoyl-CoA + AMP + diphosphate. It carries out the reaction hexadecanoate + ATP + CoA = hexadecanoyl-CoA + AMP + diphosphate. It catalyses the reaction (9Z)-hexadecenoate + ATP + CoA = (9Z)-hexadecenoyl-CoA + AMP + diphosphate. The catalysed reaction is (9Z)-tetradecenoate + ATP + CoA = (9Z)-tetradecenoyl-CoA + AMP + diphosphate. The enzyme catalyses (9Z,12Z)-octadecadienoate + ATP + CoA = (9Z,12Z)-octadecadienoyl-CoA + AMP + diphosphate. In terms of biological role, activates endogenous long-chain fatty acids (LCFA) by esterification of the fatty acids into metabolically active CoA-thioesters for subsequent degradation or incorporation into phospholipids. Acts preferentially on C16 and C18 fatty acids with a cis-double bond at C-9-C-10. In Saccharomyces cerevisiae (strain ATCC 204508 / S288c) (Baker's yeast), this protein is Long-chain-fatty-acid--CoA ligase 3 (FAA3).